Consider the following 347-residue polypeptide: N-acetyl-gamma-glutamyl-phosphate reductase (347 aa).

C151 is an active-site residue.

This sequence belongs to the NAGSA dehydrogenase family. Type 1 subfamily.

The protein localises to the cytoplasm. The catalysed reaction is N-acetyl-L-glutamate 5-semialdehyde + phosphate + NADP(+) = N-acetyl-L-glutamyl 5-phosphate + NADPH + H(+). Its pathway is amino-acid biosynthesis; L-arginine biosynthesis; N(2)-acetyl-L-ornithine from L-glutamate: step 3/4. Its function is as follows. Catalyzes the NADPH-dependent reduction of N-acetyl-5-glutamyl phosphate to yield N-acetyl-L-glutamate 5-semialdehyde. In Corynebacterium aurimucosum (strain ATCC 700975 / DSM 44827 / CIP 107346 / CN-1) (Corynebacterium nigricans), this protein is N-acetyl-gamma-glutamyl-phosphate reductase.